Consider the following 169-residue polypeptide: MVGHSESSTDAVIEPTSEELLAEQVRVFNKMKGSTNFNRVAEDVYPVEVTKSKLVCEMVVQHQHLNSKGTLHGGQTATLTDVITARAVGVTVKDKGMASVELAVSYLLPVKVGDVLEITAHVLKVGRTMAFTDCEFRRKSDGKMSAKGKHTLAFLPNQPGISVENGTQF.

Belongs to the thioesterase paaI family.

The chain is Putative esterase F42H10.6 from Caenorhabditis elegans.